The primary structure comprises 500 residues: Enolase (500 aa).

The substrate site is built by H225 and E234. The active-site Proton donor is the E277. Residues D312, E361, and D386 each coordinate Mg(2+). Residues E361 and D386 each contribute to the substrate site. K411 serves as the catalytic Proton acceptor. Substrate contacts are provided by residues 438–441 and K462; that span reads SHRS.

This sequence belongs to the enolase family. Homodimer. It depends on Mg(2+) as a cofactor.

The protein localises to the cytoplasm. It catalyses the reaction (2R)-2-phosphoglycerate = phosphoenolpyruvate + H2O. It functions in the pathway carbohydrate degradation; glycolysis; pyruvate from D-glyceraldehyde 3-phosphate: step 4/5. Its function is as follows. Enzyme of the glycolytic pathway. Glycolysis is essential in glial cells but not in neurons; neurons rely on the citric acid cycle for their energy needs, and on lactate and alanine secreted into the hemolymph by glial cells to fuel it. The polypeptide is Enolase (Drosophila melanogaster (Fruit fly)).